Reading from the N-terminus, the 156-residue chain is Small ribosomal subunit protein uS7 (156 aa).

This sequence belongs to the universal ribosomal protein uS7 family. As to quaternary structure, part of the 30S ribosomal subunit. Contacts proteins S9 and S11.

Functionally, one of the primary rRNA binding proteins, it binds directly to 16S rRNA where it nucleates assembly of the head domain of the 30S subunit. Is located at the subunit interface close to the decoding center, probably blocks exit of the E-site tRNA. The polypeptide is Small ribosomal subunit protein uS7 (Synechococcus sp. (strain CC9605)).